The following is a 119-amino-acid chain: Methylglyoxal synthase (119 aa).

One can recognise an MGS-like domain in the interval 1–119; the sequence is MKIALIAHDK…KTAELIIKQF (119 aa). Residues histidine 8, lysine 12, 34–37, and 54–55 contribute to the substrate site; these read TGTT and SG. The Proton donor/acceptor role is filled by aspartate 60. Histidine 87 is a binding site for substrate.

It belongs to the methylglyoxal synthase family.

It catalyses the reaction dihydroxyacetone phosphate = methylglyoxal + phosphate. Its function is as follows. Catalyzes the formation of methylglyoxal from dihydroxyacetone phosphate. This Clostridium beijerinckii (strain ATCC 51743 / NCIMB 8052) (Clostridium acetobutylicum) protein is Methylglyoxal synthase.